The following is a 259-amino-acid chain: Pyrroloquinoline-quinone synthase (259 aa).

It belongs to the PqqC family.

The enzyme catalyses 6-(2-amino-2-carboxyethyl)-7,8-dioxo-1,2,3,4,7,8-hexahydroquinoline-2,4-dicarboxylate + 3 O2 = pyrroloquinoline quinone + 2 H2O2 + 2 H2O + H(+). The protein operates within cofactor biosynthesis; pyrroloquinoline quinone biosynthesis. In terms of biological role, ring cyclization and eight-electron oxidation of 3a-(2-amino-2-carboxyethyl)-4,5-dioxo-4,5,6,7,8,9-hexahydroquinoline-7,9-dicarboxylic-acid to PQQ. This chain is Pyrroloquinoline-quinone synthase, found in Bradyrhizobium sp. (strain ORS 278).